The chain runs to 255 residues: 5-oxoprolinase subunit A (255 aa).

Belongs to the LamB/PxpA family. Forms a complex composed of PxpA, PxpB and PxpC.

It catalyses the reaction 5-oxo-L-proline + ATP + 2 H2O = L-glutamate + ADP + phosphate + H(+). Functionally, catalyzes the cleavage of 5-oxoproline to form L-glutamate coupled to the hydrolysis of ATP to ADP and inorganic phosphate. This is 5-oxoprolinase subunit A from Rhodopseudomonas palustris (strain BisB18).